The sequence spans 235 residues: Small ribosomal subunit protein eS4 (235 aa).

Residues 38–99 (VTLLTIIRDY…GESYRVVYNN (62 aa)) enclose the S4 RNA-binding domain.

This sequence belongs to the eukaryotic ribosomal protein eS4 family.

In Thermoplasma volcanium (strain ATCC 51530 / DSM 4299 / JCM 9571 / NBRC 15438 / GSS1), this protein is Small ribosomal subunit protein eS4 (rps4e).